A 438-amino-acid chain; its full sequence is Putative phospholipase A2 (438 aa).

Serine 257 acts as the Nucleophile in catalysis. Active-site charge relay system residues include aspartate 291 and histidine 368.

It belongs to the serine esterase family.

Its subcellular location is the cytoplasm. The protein localises to the nucleus. The catalysed reaction is a 1-O-alkyl-2-acetyl-sn-glycero-3-phosphocholine + H2O = a 1-O-alkyl-sn-glycero-3-phosphocholine + acetate + H(+). This chain is Putative phospholipase A2, found in Schizosaccharomyces pombe (strain 972 / ATCC 24843) (Fission yeast).